The chain runs to 85 residues: Elongation factor 1-beta (85 aa).

Belongs to the EF-1-beta/EF-1-delta family.

Promotes the exchange of GDP for GTP in EF-1-alpha/GDP, thus allowing the regeneration of EF-1-alpha/GTP that could then be used to form the ternary complex EF-1-alpha/GTP/AAtRNA. This Methanosphaerula palustris (strain ATCC BAA-1556 / DSM 19958 / E1-9c) protein is Elongation factor 1-beta.